The primary structure comprises 297 residues: Formamidopyrimidine-DNA glycosylase (297 aa).

The active-site Schiff-base intermediate with DNA is the P2. Residue E3 is the Proton donor of the active site. The Proton donor; for beta-elimination activity role is filled by K58. DNA contacts are provided by H106, R125, and R168. The FPG-type zinc-finger motif lies at 259–295 (RVYDREGLACTARGCRGRVRRIVQAGRSTFYCETCQP). Catalysis depends on R285, which acts as the Proton donor; for delta-elimination activity.

This sequence belongs to the FPG family. Monomer. Zn(2+) serves as cofactor.

The enzyme catalyses Hydrolysis of DNA containing ring-opened 7-methylguanine residues, releasing 2,6-diamino-4-hydroxy-5-(N-methyl)formamidopyrimidine.. The catalysed reaction is 2'-deoxyribonucleotide-(2'-deoxyribose 5'-phosphate)-2'-deoxyribonucleotide-DNA = a 3'-end 2'-deoxyribonucleotide-(2,3-dehydro-2,3-deoxyribose 5'-phosphate)-DNA + a 5'-end 5'-phospho-2'-deoxyribonucleoside-DNA + H(+). Its function is as follows. Involved in base excision repair of DNA damaged by oxidation or by mutagenic agents. Acts as a DNA glycosylase that recognizes and removes damaged bases. Has a preference for oxidized purines, such as 7,8-dihydro-8-oxoguanine (8-oxoG). Has AP (apurinic/apyrimidinic) lyase activity and introduces nicks in the DNA strand. Cleaves the DNA backbone by beta-delta elimination to generate a single-strand break at the site of the removed base with both 3'- and 5'-phosphates. This Methylobacterium sp. (strain 4-46) protein is Formamidopyrimidine-DNA glycosylase.